A 389-amino-acid polypeptide reads, in one-letter code: MSEYLFTSESVSEGHPDKVADQVSDAILDAILAQDPKARVAAETLVNTGLCVLAGEITTTAQVDYIKVARETIKRIGYNSSELGFDANGCAVGVYYDQQSPDIAQGVNEGEGIDLNQGAGDQGLMFGYACDETPTLMPFAIYYSHRLMQRQSELRKDGRLPWLRPDAKAQLTVVYDSETGKVKRIDTVVLSTQHDPEIGYEELKNAVIEQIIKPVLPSELLTDETKYLINPTGRFVIGGPQGDCGLTGRKIIVDTYGGAAPHGGGAFSGKDPSKVDRSAAYACRYVAKNIVAAGLATQCQIQVSYAIGVAEPTSISIDTFGTGKISEEKLITLVREHFDLRPKGIVQMLDLLRPIYSKSAAYGHFGREEPEFTWERTDKAAALRAAAGL.

His-15 contributes to the ATP binding site. Asp-17 lines the Mg(2+) pocket. Glu-43 provides a ligand contact to K(+). L-methionine-binding residues include Glu-56 and Gln-99. Residues 99-109 form a flexible loop region; that stretch reads QSPDIAQGVNE. Residues 166–168, 234–235, Asp-243, 249–250, Ala-266, and Lys-270 contribute to the ATP site; these read DAK, RF, and RK. Asp-243 contributes to the L-methionine binding site. Lys-274 is a binding site for L-methionine.

Belongs to the AdoMet synthase family. As to quaternary structure, homotetramer; dimer of dimers. Mg(2+) is required as a cofactor. The cofactor is K(+).

The protein resides in the cytoplasm. The catalysed reaction is L-methionine + ATP + H2O = S-adenosyl-L-methionine + phosphate + diphosphate. It functions in the pathway amino-acid biosynthesis; S-adenosyl-L-methionine biosynthesis; S-adenosyl-L-methionine from L-methionine: step 1/1. Its function is as follows. Catalyzes the formation of S-adenosylmethionine (AdoMet) from methionine and ATP. The overall synthetic reaction is composed of two sequential steps, AdoMet formation and the subsequent tripolyphosphate hydrolysis which occurs prior to release of AdoMet from the enzyme. The sequence is that of S-adenosylmethionine synthase from Neisseria meningitidis serogroup C (strain 053442).